The sequence spans 279 residues: 3-methyl-2-oxobutanoate hydroxymethyltransferase (279 aa).

Mg(2+)-binding residues include Asp-43 and Asp-82. Residues 43-44, Asp-82, and Lys-112 each bind 3-methyl-2-oxobutanoate; that span reads DS. Glu-114 is a binding site for Mg(2+). The Proton acceptor role is filled by Glu-181.

Belongs to the PanB family. Homodecamer; pentamer of dimers. Mg(2+) serves as cofactor.

It localises to the cytoplasm. It catalyses the reaction 3-methyl-2-oxobutanoate + (6R)-5,10-methylene-5,6,7,8-tetrahydrofolate + H2O = 2-dehydropantoate + (6S)-5,6,7,8-tetrahydrofolate. The protein operates within cofactor biosynthesis; (R)-pantothenate biosynthesis; (R)-pantoate from 3-methyl-2-oxobutanoate: step 1/2. Catalyzes the reversible reaction in which hydroxymethyl group from 5,10-methylenetetrahydrofolate is transferred onto alpha-ketoisovalerate to form ketopantoate. This is 3-methyl-2-oxobutanoate hydroxymethyltransferase from Bacillus pumilus (strain SAFR-032).